An 817-amino-acid chain; its full sequence is Lon protease (817 aa).

The 196-residue stretch at 44 to 239 (LPILPLRNTV…ETLRYMNVEL (196 aa)) folds into the Lon N-terminal domain. 390–397 (GPPGVGKT) is an ATP binding site. One can recognise a Lon proteolytic domain in the interval 626-807 (NDVAGVVTGL…SEVLAIALTD (182 aa)). Residues Ser713 and Lys756 contribute to the active site.

Belongs to the peptidase S16 family. Homohexamer. Organized in a ring with a central cavity.

Its subcellular location is the cytoplasm. It catalyses the reaction Hydrolysis of proteins in presence of ATP.. In terms of biological role, ATP-dependent serine protease that mediates the selective degradation of mutant and abnormal proteins as well as certain short-lived regulatory proteins. Required for cellular homeostasis and for survival from DNA damage and developmental changes induced by stress. Degrades polypeptides processively to yield small peptide fragments that are 5 to 10 amino acids long. Binds to DNA in a double-stranded, site-specific manner. The sequence is that of Lon protease from Flavobacterium johnsoniae (strain ATCC 17061 / DSM 2064 / JCM 8514 / BCRC 14874 / CCUG 350202 / NBRC 14942 / NCIMB 11054 / UW101) (Cytophaga johnsonae).